The chain runs to 727 residues: LIM domain-binding protein 3 (727 aa).

One can recognise a PDZ domain in the interval 1-84; sequence MSYSVTLTGP…NLSLTLQKSK (84 aa). Residues Ser44, Ser121, and Ser123 each carry the phosphoserine modification. Positions 86–197 are disordered; it reads PIPISTTAPP…GSSQPRQYNN (112 aa). Positions 140-156 are enriched in low complexity; it reads PTFSPAFSRPSAFSSLA. Polar residues predominate over residues 188–197; the sequence is GSSQPRQYNN. At Ser217 the chain carries Phosphoserine. Arg219 carries the post-translational modification Omega-N-methylarginine. Ser223 bears the Phosphoserine mark. 2 disordered regions span residues 284–440 and 472–529; these read TEFM…YTPS and APSV…PQVP. Residues 312–385 show a composition bias toward low complexity; that stretch reads ATTPLLPASA…SAPATHTSYS (74 aa). The span at 428 to 440 shows a compositional bias: pro residues; the sequence is PYTPSPAPAYTPS. Polar residues predominate over residues 494–513; it reads DSFSQKFAPGKSTTSISKQT. Omega-N-methylarginine occurs at positions 516 and 533. LIM zinc-binding domains follow at residues 549–607, 608–667, and 668–727; these read PLCG…QFFA, PLCA…LFST, and KCHG…TINL.

In terms of assembly, interacts via its LIM domains with various PKC isoforms. Interacts via its PDZ domain with the ACTN2 C-terminal region. Interacts with MYOZ1, MYOZ2 and MYOZ3. Expressed primarily in skeletal muscle and to a lesser extent in heart. Also detected in brain and placenta.

It localises to the cytoplasm. The protein resides in the perinuclear region. Its subcellular location is the cell projection. It is found in the pseudopodium. The protein localises to the cytoskeleton. It localises to the myofibril. The protein resides in the sarcomere. Its subcellular location is the z line. Its function is as follows. May function as an adapter in striated muscle to couple protein kinase C-mediated signaling via its LIM domains to the cytoskeleton. This is LIM domain-binding protein 3 from Homo sapiens (Human).